The sequence spans 1137 residues: Isoleucine--tRNA ligase (1137 aa).

The short motif at 50–60 is the 'HIGH' region element; sequence PSANGMPGIHH. The short motif at 688–692 is the 'KMSKS' region element; it reads KMSKR. Lysine 691 contributes to the ATP binding site.

Belongs to the class-I aminoacyl-tRNA synthetase family. IleS type 2 subfamily. Monomer. Zn(2+) is required as a cofactor.

The protein localises to the cytoplasm. The catalysed reaction is tRNA(Ile) + L-isoleucine + ATP = L-isoleucyl-tRNA(Ile) + AMP + diphosphate. In terms of biological role, catalyzes the attachment of isoleucine to tRNA(Ile). As IleRS can inadvertently accommodate and process structurally similar amino acids such as valine, to avoid such errors it has two additional distinct tRNA(Ile)-dependent editing activities. One activity is designated as 'pretransfer' editing and involves the hydrolysis of activated Val-AMP. The other activity is designated 'posttransfer' editing and involves deacylation of mischarged Val-tRNA(Ile). The sequence is that of Isoleucine--tRNA ligase from Porphyromonas gingivalis (strain ATCC BAA-308 / W83).